A 270-amino-acid chain; its full sequence is Palmitoyltransferase ZDHHC12-A (270 aa).

The Cytoplasmic portion of the chain corresponds to 1–8; sequence MNKSLFKS. A helical membrane pass occupies residues 9–29; it reads GCLVRTAHVILTWIITLILFL. Topologically, residues 30 to 45 are lumenal; it reads HNTDLRRCQERGDLLQ. The helical transmembrane segment at 46–66 threads the bilayer; sequence PLVFSSVLLLSVLLYFTVSLM. At 67–145 the chain is on the cytoplasmic side; sequence DPGFVLSDSQ…DNCVGELNHR (79 aa). Residues 102-152 enclose the DHHC domain; that stretch reads RRCGYCFLLQPMRARHCKWCKRCVRRFDHHCPWIDNCVGELNHRWFLLYLC. The S-palmitoyl cysteine intermediate role is filled by Cys-132. A helical membrane pass occupies residues 146–166; sequence WFLLYLCVQFTAVCWGLQSAW. The Lumenal portion of the chain corresponds to 167–182; it reads SGFISAPSWQQWFTQN. A helical transmembrane segment spans residues 183–203; the sequence is VFLLVAFAVTAVFSVVLLLLL. At 204-270 the chain is on the cytoplasmic side; sequence CIHAYLASVN…MYIRHNNASV (67 aa).

It belongs to the DHHC palmitoyltransferase family.

It localises to the golgi apparatus membrane. The protein resides in the endoplasmic reticulum membrane. It carries out the reaction L-cysteinyl-[protein] + hexadecanoyl-CoA = S-hexadecanoyl-L-cysteinyl-[protein] + CoA. Its function is as follows. Palmitoyltransferase that catalyzes the addition of palmitate onto various protein substrates. Has a palmitoyltransferase activity toward gephyrin/GPHN, regulating its clustering at synapses and its function in gamma-aminobutyric acid receptor clustering. Acts as an inhibitor of the NLRP3 inflammasome by mediating palmitoylation of NLRP3, thereby promoting NLRP3 degradation by the chaperone-mediated autophagy (CMA) process. The sequence is that of Palmitoyltransferase ZDHHC12-A from Danio rerio (Zebrafish).